An 89-amino-acid polypeptide reads, in one-letter code: Small ribosomal subunit protein uS19 (89 aa).

This sequence belongs to the universal ribosomal protein uS19 family.

Protein S19 forms a complex with S13 that binds strongly to the 16S ribosomal RNA. This is Small ribosomal subunit protein uS19 from Parabacteroides distasonis (strain ATCC 8503 / DSM 20701 / CIP 104284 / JCM 5825 / NCTC 11152).